We begin with the raw amino-acid sequence, 416 residues long: Histidine--tRNA ligase (416 aa).

Belongs to the class-II aminoacyl-tRNA synthetase family.

The protein resides in the cytoplasm. It carries out the reaction tRNA(His) + L-histidine + ATP = L-histidyl-tRNA(His) + AMP + diphosphate + H(+). The sequence is that of Histidine--tRNA ligase from Methanococcus maripaludis (strain DSM 14266 / JCM 13030 / NBRC 101832 / S2 / LL).